Consider the following 504-residue polypeptide: UDP-N-acetylglucosamine--peptide N-acetylglucosaminyltransferase GtfA subunit (504 aa).

Residue 16–19 (GVEY) coordinates UDP. H243 provides a ligand contact to N-acetyl-D-glucosamine. 385–386 (HK) lines the UDP pocket. Position 405–408 (405–408 (EGFG)) interacts with N-acetyl-D-glucosamine.

The protein belongs to the glycosyltransferase group 1 family. Glycosyltransferase 4 subfamily. Interacts with stabilizing protein GtfB (Gtf1), probably via the N-terminus of this protein; probably forms a heterotetramer with 2 subunits each of GtfA and GtfB. Part of the accessory SecA2/SecY2 protein translocation apparatus.

It is found in the cytoplasm. The protein resides in the cell membrane. The enzyme catalyses L-seryl-[protein] + UDP-N-acetyl-alpha-D-glucosamine = 3-O-[N-acetyl-alpha-D-glucosaminyl]-L-seryl-[protein] + UDP + H(+). It functions in the pathway protein modification; protein glycosylation. Functionally, required for polymorphic O-glycosylation of serine-rich repeat protein Fap1. Catalyzes the first step in glycosylation by transferring N-acetylglucosamine from UDP-GlcNAc to serine residues in Fap1. Part of the accessory SecA2/SecY2 system specifically required to export Fap1, a serine-rich fimbrial adhesin encoded upstream in the same operon. The GtfA-GtfB (Gtf1-Gtf2 in this bacteria) complex adds GlcNAc from UDP-GlcNAc to Fap1, attaching the first sugar residue. Cannot use not UDP-Glc as substrate. This subunit has very low glycosyltransferase activity; the GtfB stabilizing protein enhances membrane association, protease resistance and glycosyltransferase activity. The sequence is that of UDP-N-acetylglucosamine--peptide N-acetylglucosaminyltransferase GtfA subunit from Streptococcus parasanguinis.